Consider the following 611-residue polypeptide: Leukotriene A-4 hydrolase (611 aa).

K73 bears the N6-acetyllysine mark. Residues 135 to 137 and 267 to 272 contribute to the a peptide site; these read QCQ and PYGGME. H296 lines the Zn(2+) pocket. The active-site Proton acceptor is the E297. Positions 300 and 319 each coordinate Zn(2+). K337 is modified (N6-acetyllysine). The Proton donor role is filled by Y384. At K414 the chain carries N6-acetyllysine. At S416 the chain carries Phosphoserine. Residue 564-566 coordinates a peptide; it reads RMK. N6-acetyllysine is present on K573.

It belongs to the peptidase M1 family. As to quaternary structure, monomer. It depends on Zn(2+) as a cofactor. In terms of processing, phosphorylation at Ser-416 inhibits leukotriene-A4 hydrolase activity.

It localises to the cytoplasm. It carries out the reaction leukotriene A4 + H2O = leukotriene B4. It catalyses the reaction (5S,6S)-epoxy-(18R)-hydroxy-(7E,9E,11Z,14Z,16E)-eicosapentaenoate + H2O = resolvin E1. The enzyme catalyses (5S,6S)-epoxy-(18S)-hydroxy-(7E,9E,11Z,14Z,16E)-eicosapentaenoate + H2O = 18S-resolvin E1. The catalysed reaction is Release of the N-terminal residue from a tripeptide.. Its pathway is lipid metabolism; leukotriene B4 biosynthesis. Its activity is regulated as follows. Inhibited by bestatin. Inhibited by captopril. The epoxide hydrolase activity is restrained by suicide inactivation that involves binding of LTA4 to Tyr-379. 4-(4-benzylphenyl)thiazol-2-amine (ARM1) selectively inhibits the epoxide hydrolase activity. Bifunctional zinc metalloenzyme that comprises both epoxide hydrolase (EH) and aminopeptidase activities. Acts as an epoxide hydrolase to catalyze the conversion of LTA4 to the pro-inflammatory mediator leukotriene B4 (LTB4). Also has aminopeptidase activity, with high affinity for N-terminal arginines of various synthetic tripeptides. In addition to its pro-inflammatory EH activity, may also counteract inflammation by its aminopeptidase activity, which inactivates by cleavage another neutrophil attractant, the tripeptide Pro-Gly-Pro (PGP), a bioactive fragment of collagen generated by the action of matrix metalloproteinase-9 (MMP9) and prolylendopeptidase (PREPL). Involved also in the biosynthesis of resolvin E1 and 18S-resolvin E1 from eicosapentaenoic acid, two lipid mediators that show potent anti-inflammatory and pro-resolving actions. The sequence is that of Leukotriene A-4 hydrolase (Lta4h) from Rattus norvegicus (Rat).